We begin with the raw amino-acid sequence, 344 residues long: MMNRLINEQDGRNYSAKPDSSAAGSQENENTIELTVPDNLAGLRLDQALAQLLPQWSRSRLQGWIEQKCVSVDSAAATCKQKVWGGESIRVIAGQTENDQSHQAEAIPLKILFEDDHLIIIDKPAGLVVHPGNGNWHGTLLNALLNHAPQLSQVPRAGIVHRLDKDTTGLLVVAKTIEAQFDLARQLQQRTVKRHYLALVLGKLEKDGVVDAPIGRHPIHRTRMAVVQNGKPARTHYRVLEKFTASTLLHCSLETGRTHQIRVHLLSIGHPLAGDPVYGRTSPDPSTADAVVRLPRQALHAWQLELTHPHSGQILLWESPLPDDMAALLQAIRNLPHSSVSRPL.

A disordered region spans residues 1-29; the sequence is MMNRLINEQDGRNYSAKPDSSAAGSQENE. The S4 RNA-binding domain maps to 43 to 116; sequence LRLDQALAQL…IPLKILFEDD (74 aa). D164 is a catalytic residue.

Belongs to the pseudouridine synthase RluA family.

It localises to the cytoplasm. The catalysed reaction is uridine(1911/1915/1917) in 23S rRNA = pseudouridine(1911/1915/1917) in 23S rRNA. Functionally, responsible for synthesis of pseudouridine from uracil at positions 1911, 1915 and 1917 in 23S ribosomal RNA. This Nitrosomonas europaea (strain ATCC 19718 / CIP 103999 / KCTC 2705 / NBRC 14298) protein is Ribosomal large subunit pseudouridine synthase D (rluD).